A 297-amino-acid polypeptide reads, in one-letter code: Nucleotide-binding protein DSY4845 (297 aa).

Residue 13-20 (GLSGAGKT) participates in ATP binding. Position 64–67 (64–67 (DLRG)) interacts with GTP.

It belongs to the RapZ-like family.

Functionally, displays ATPase and GTPase activities. This is Nucleotide-binding protein DSY4845 from Desulfitobacterium hafniense (strain Y51).